The following is a 198-amino-acid chain: Na(+)-translocating NADH-quinone reductase subunit E (198 aa).

The next 6 helical transmembrane spans lie at 11–31 (SIFI…FLAV), 40–60 (GLGI…NLVF), 77–97 (FLGF…LEMF), 110–130 (GIFL…SFMV), 140–160 (VVYG…MAAI), and 176–196 (LGIT…FSGI).

The protein belongs to the NqrDE/RnfAE family. As to quaternary structure, composed of six subunits; NqrA, NqrB, NqrC, NqrD, NqrE and NqrF.

It localises to the cell inner membrane. It carries out the reaction a ubiquinone + n Na(+)(in) + NADH + H(+) = a ubiquinol + n Na(+)(out) + NAD(+). Functionally, NQR complex catalyzes the reduction of ubiquinone-1 to ubiquinol by two successive reactions, coupled with the transport of Na(+) ions from the cytoplasm to the periplasm. NqrA to NqrE are probably involved in the second step, the conversion of ubisemiquinone to ubiquinol. This Tolumonas auensis (strain DSM 9187 / NBRC 110442 / TA 4) protein is Na(+)-translocating NADH-quinone reductase subunit E.